We begin with the raw amino-acid sequence, 232 residues long: Large ribosomal subunit protein uL1 (232 aa).

Belongs to the universal ribosomal protein uL1 family. In terms of assembly, part of the 50S ribosomal subunit.

In terms of biological role, binds directly to 23S rRNA. The L1 stalk is quite mobile in the ribosome, and is involved in E site tRNA release. Functionally, protein L1 is also a translational repressor protein, it controls the translation of the L11 operon by binding to its mRNA. This is Large ribosomal subunit protein uL1 from Thermosipho africanus (strain TCF52B).